The sequence spans 650 residues: NAC domain-containing protein 54 (650 aa).

The region spanning 6–156 is the NAC domain; that stretch reads LPPGFRFHPT…AYALCRVFKK (151 aa). A DNA-binding region spans residues 105–162; it reads VGMKKTLVYYRGRAPHGSRTDWVMHEYRLDERECETDTGLQDAYALCRVFKKTAPGPK.

As to expression, expressed in leaves, roots and flowers.

Its subcellular location is the nucleus. Transcription factor that functions as a regulator of the jasmonate (JA) signaling pathway. May regulate the expression of genes encoding JA biosynthetic enzymes, such as lipoxygenase 7 (CM-LOX1), allene oxide synthase 2 (AOS2) and OPDA reductase 7 (OPR7). Involved in abscisic acid-induced leaf senescence. Activates the abscisic acid (ABA) signaling-associated gene ABI5 and the senescence-associated gene NYC1 by directly binding to the mitochondrial dysfunction motif (MDM) present in their promoters. Possesses transcriptional activator activity in yeast. Required for the multiplication of the rice dwarf virus (RDV). The sequence is that of NAC domain-containing protein 54 from Oryza sativa subsp. japonica (Rice).